Reading from the N-terminus, the 223-residue chain is Endonuclease NucS (223 aa).

The protein belongs to the NucS endonuclease family.

It is found in the cytoplasm. Functionally, cleaves both 3' and 5' ssDNA extremities of branched DNA structures. This is Endonuclease NucS from Streptomyces avermitilis (strain ATCC 31267 / DSM 46492 / JCM 5070 / NBRC 14893 / NCIMB 12804 / NRRL 8165 / MA-4680).